Consider the following 927-residue polypeptide: SPX and EXS domain-containing protein 5 (927 aa).

The 460-residue stretch at 1-460 folds into the SPX domain; it reads MKFGKYLESQ…GLSIGSQVMS (460 aa). Disordered regions lie at residues 54 to 78, 204 to 239, 257 to 305, and 326 to 355; these read KINSKQPSPTTATATTTTIGISSSN, KKNKLNNNNNNNNNNNNNNNNTTSPPPLSHDQQHLQ, PIKS…DQDP, and SDNCNDNGASDEFNGSVNNNGAGSGGGGNN. Composition is skewed to low complexity over residues 60 to 78 and 208 to 224; these read PSPTTATATTTTIGISSSN and LNNNNNNNNNNNNNNNN. The span at 257–270 shows a compositional bias: polar residues; it reads PIKSTPLSPKQQDG. The segment covering 286 to 299 has biased composition (acidic residues); sequence LEEEEEEEEEEDDN. 8 helical membrane passes run 516–536, 553–573, 597–617, 636–656, 682–702, 769–789, 845–862, and 869–889; these read FFSGVCAGWTSALLMLIYYFI, VYSAFGLVLLWAFIFGIDCWV, IFQAVTLLSVMWITSIGVYMW, PLVLFGAYMLILVCPFNIFQL, FFMGDQLSSLVLMIVQFAQFV, LSIVVVVCSTLDGFFSGDSGW, FVYYFAIFSNLGFRTTWT, and QLTNILPSYKLVVVIGIIEIL. Residues 717-927 form the EXS domain; it reads GCIRYARYFN…LPYQIRDNEN (211 aa).

This sequence belongs to the SYG1 (TC 2.A.94) family.

It is found in the membrane. The sequence is that of SPX and EXS domain-containing protein 5 from Dictyostelium discoideum (Social amoeba).